The sequence spans 473 residues: 3-isopropylmalate dehydratase large subunit (473 aa).

3 residues coordinate [4Fe-4S] cluster: Cys348, Cys408, and Cys411. The interval 421-440 is disordered; sequence GDEASASSSNRNFIGRQGSK.

The protein belongs to the aconitase/IPM isomerase family. LeuC type 1 subfamily. In terms of assembly, heterodimer of LeuC and LeuD. [4Fe-4S] cluster serves as cofactor.

It carries out the reaction (2R,3S)-3-isopropylmalate = (2S)-2-isopropylmalate. The protein operates within amino-acid biosynthesis; L-leucine biosynthesis; L-leucine from 3-methyl-2-oxobutanoate: step 2/4. Functionally, catalyzes the isomerization between 2-isopropylmalate and 3-isopropylmalate, via the formation of 2-isopropylmaleate. In Haloferax volcanii (strain ATCC 29605 / DSM 3757 / JCM 8879 / NBRC 14742 / NCIMB 2012 / VKM B-1768 / DS2) (Halobacterium volcanii), this protein is 3-isopropylmalate dehydratase large subunit.